Consider the following 497-residue polypeptide: Glycerol kinase (497 aa).

Residue Thr11 coordinates ADP. The ATP site is built by Thr11, Ser12, and Ser13. Thr11 lines the sn-glycerol 3-phosphate pocket. Arg15 is a binding site for ADP. Positions 81, 82, 133, and 242 each coordinate sn-glycerol 3-phosphate. Residues Arg81, Glu82, Tyr133, Asp242, and Gln243 each coordinate glycerol. ADP is bound by residues Thr264 and Gly307. Positions 264, 307, 311, and 412 each coordinate ATP. ADP is bound by residues Gly412 and Asn416.

This sequence belongs to the FGGY kinase family.

The catalysed reaction is glycerol + ATP = sn-glycerol 3-phosphate + ADP + H(+). It participates in polyol metabolism; glycerol degradation via glycerol kinase pathway; sn-glycerol 3-phosphate from glycerol: step 1/1. Inhibited by fructose 1,6-bisphosphate (FBP). Key enzyme in the regulation of glycerol uptake and metabolism. Catalyzes the phosphorylation of glycerol to yield sn-glycerol 3-phosphate. The chain is Glycerol kinase from Leptothrix cholodnii (strain ATCC 51168 / LMG 8142 / SP-6) (Leptothrix discophora (strain SP-6)).